Reading from the N-terminus, the 393-residue chain is MRAANATTGAVRRLFLIATEESGDRLGAALMQALKTRLGDGVVFEGVGGRAMAEQGLVSLFPIEELSIMGISAVVRRLPSILRRIRSTADAVLGAKPDMLIIIDSPDFTHRVARRVRVRDPSIAIVNYVSPTVWAWRPGRARAMRRYVDHVLALLPFEPEEYRRLRGPPCTYVGHPLTEQIAHLRPSPAEQARRDAEPPVLVVLPGSRRSEIHHLMAVFGETLGRLQAEQGDLELILPTVPHLRDAVEAGVRDWPVQPRIVVGDADKKAAFRIARAAFAKSGTVTLELALAHVPMVAVYKAGAMEAWIGKRVIRSASVILANLVVGENVIPEFIQEDCVPDRLVPALREVLADTPMRARQLEGFGRIDDIMSTGAQTPSGRAADIVLNVLRKH.

Belongs to the LpxB family.

It carries out the reaction a lipid X + a UDP-2-N,3-O-bis[(3R)-3-hydroxyacyl]-alpha-D-glucosamine = a lipid A disaccharide + UDP + H(+). It functions in the pathway bacterial outer membrane biogenesis; LPS lipid A biosynthesis. Condensation of UDP-2,3-diacylglucosamine and 2,3-diacylglucosamine-1-phosphate to form lipid A disaccharide, a precursor of lipid A, a phosphorylated glycolipid that anchors the lipopolysaccharide to the outer membrane of the cell. The sequence is that of Lipid-A-disaccharide synthase from Rhodopseudomonas palustris (strain HaA2).